Consider the following 619-residue polypeptide: DEAD-box ATP-dependent RNA helicase 35B (619 aa).

Composition is skewed to low complexity over residues 1–10 (MAAAAAAAAA) and 49–58 (PPTTNAVAVA). The disordered stretch occupies residues 1-72 (MAAAAAAAAA…PPRSTSSPAV (72 aa)). Residues 173–201 (RSFGDLRLPEPILRALRGKGIEKPTPIQV) carry the Q motif motif. The Helicase ATP-binding domain occupies 204-388 (LPVALSGRDM…KSALVKPIIV (185 aa)). 217–224 (AFTGSGKT) provides a ligand contact to ATP. Residues 336–339 (DEAD) carry the DEAD box motif. The region spanning 399–559 (DVIQEVEYVK…RLPPILADLD (161 aa)) is the Helicase C-terminal domain. Residues 576–593 (KGCAFCGGLGHRIEACPK) form a CCHC-type zinc finger.

It belongs to the DEAD box helicase family. DDX41 subfamily.

The catalysed reaction is ATP + H2O = ADP + phosphate + H(+). This chain is DEAD-box ATP-dependent RNA helicase 35B, found in Oryza sativa subsp. japonica (Rice).